A 298-amino-acid polypeptide reads, in one-letter code: MDQKQIEEIVRSVMASMGQDVPQPVAPSKQEGAKPQCASPTVTESCALDLGSAEAKAWIGVENPHRADVLTELRRSTAARVCTGRAGPRPRTQALLRFLADHSRSKDTVLKEVPEEWVKAQGLLEVRSEISDKNLYLTRPDMGRRLSPEAIDALKSQCVMNPDVQVVVSDGLSTDAITANYEEILPPLLAGLKQAGLNVGTPFFVRYGRVKIEDQIGEILGAKVVILLVGERPGLGQSESLSCYAVYSPRVATTVEADRTCISNIHQGGTPPVEAAAVIVDLAKRMLEQKASGINMTR.

Positions 17–37 (MGQDVPQPVAPSKQEGAKPQC) are disordered. Residues valine 210, glutamate 231, and cysteine 261 each coordinate adenosylcob(III)alamin.

It belongs to the EutC family. The basic unit is a heterodimer which dimerizes to form tetramers. The heterotetramers trimerize; 6 large subunits form a core ring with 6 small subunits projecting outwards. Adenosylcob(III)alamin serves as cofactor.

The protein localises to the bacterial microcompartment. The enzyme catalyses ethanolamine = acetaldehyde + NH4(+). It functions in the pathway amine and polyamine degradation; ethanolamine degradation. Catalyzes the deamination of various vicinal amino-alcohols to oxo compounds. Allows this organism to utilize ethanolamine as the sole source of nitrogen and carbon in the presence of external vitamin B12. This chain is Ethanolamine ammonia-lyase small subunit, found in Salmonella paratyphi A (strain ATCC 9150 / SARB42).